The chain runs to 400 residues: Argininosuccinate synthase (400 aa).

Residues 6-14 and A33 each bind ATP; that span reads AYSGGLDTS. The L-citrulline site is built by Y84 and S89. G114 is a binding site for ATP. 3 residues coordinate L-aspartate: T116, N120, and D121. N120 contacts L-citrulline. L-citrulline contacts are provided by R124, S173, S182, E258, and Y270.

It belongs to the argininosuccinate synthase family. Type 1 subfamily. In terms of assembly, homotetramer.

Its subcellular location is the cytoplasm. It carries out the reaction L-citrulline + L-aspartate + ATP = 2-(N(omega)-L-arginino)succinate + AMP + diphosphate + H(+). It participates in amino-acid biosynthesis; L-arginine biosynthesis; L-arginine from L-ornithine and carbamoyl phosphate: step 2/3. The sequence is that of Argininosuccinate synthase from Thermus thermophilus (strain ATCC 27634 / DSM 579 / HB8).